We begin with the raw amino-acid sequence, 120 residues long: Ribonuclease P protein component 2 (120 aa).

It belongs to the eukaryotic/archaeal RNase P protein component 2 family. As to quaternary structure, consists of a catalytic RNA component and at least 4-5 protein subunits.

The protein localises to the cytoplasm. The catalysed reaction is Endonucleolytic cleavage of RNA, removing 5'-extranucleotides from tRNA precursor.. In terms of biological role, part of ribonuclease P, a protein complex that generates mature tRNA molecules by cleaving their 5'-ends. The protein is Ribonuclease P protein component 2 of Thermococcus kodakarensis (strain ATCC BAA-918 / JCM 12380 / KOD1) (Pyrococcus kodakaraensis (strain KOD1)).